The primary structure comprises 180 residues: NADH-quinone oxidoreductase subunit I (180 aa).

2 4Fe-4S ferredoxin-type domains span residues 50–80 and 90–119; these read LTRD…LQKA and EFFR…LTPD. The [4Fe-4S] cluster site is built by Cys60, Cys63, Cys66, Cys70, Cys99, Cys102, Cys105, and Cys109.

This sequence belongs to the complex I 23 kDa subunit family. As to quaternary structure, NDH-1 is composed of 13 different subunits. Subunits NuoA, H, J, K, L, M, N constitute the membrane sector of the complex. It depends on [4Fe-4S] cluster as a cofactor.

It localises to the cell inner membrane. It catalyses the reaction a quinone + NADH + 5 H(+)(in) = a quinol + NAD(+) + 4 H(+)(out). Functionally, NDH-1 shuttles electrons from NADH, via FMN and iron-sulfur (Fe-S) centers, to quinones in the respiratory chain. The immediate electron acceptor for the enzyme in this species is believed to be ubiquinone. Couples the redox reaction to proton translocation (for every two electrons transferred, four hydrogen ions are translocated across the cytoplasmic membrane), and thus conserves the redox energy in a proton gradient. The chain is NADH-quinone oxidoreductase subunit I from Salmonella choleraesuis (strain SC-B67).